Reading from the N-terminus, the 440-residue chain is tRNA modification GTPase MnmE (440 aa).

(6S)-5-formyl-5,6,7,8-tetrahydrofolate-binding residues include Arg-34, Glu-94, and Arg-134. Residues 229–367 (GVRVVLAGPP…LVALLLDRAA (139 aa)) enclose the TrmE-type G domain. Position 239 (Asn-239) interacts with K(+). Residues 239–244 (NAGKST), 258–264 (TPIAGTT), 283–286 (DTAG), and 348–350 (SAR) contribute to the GTP site. Mg(2+) is bound at residue Ser-243. Residues Thr-258, Ile-260, and Thr-263 each coordinate K(+). Thr-264 contributes to the Mg(2+) binding site. Lys-440 is a (6S)-5-formyl-5,6,7,8-tetrahydrofolate binding site.

This sequence belongs to the TRAFAC class TrmE-Era-EngA-EngB-Septin-like GTPase superfamily. TrmE GTPase family. In terms of assembly, homodimer. Heterotetramer of two MnmE and two MnmG subunits. The cofactor is K(+).

Its subcellular location is the cytoplasm. Functionally, exhibits a very high intrinsic GTPase hydrolysis rate. Involved in the addition of a carboxymethylaminomethyl (cmnm) group at the wobble position (U34) of certain tRNAs, forming tRNA-cmnm(5)s(2)U34. The chain is tRNA modification GTPase MnmE from Rhizorhabdus wittichii (strain DSM 6014 / CCUG 31198 / JCM 15750 / NBRC 105917 / EY 4224 / RW1) (Sphingomonas wittichii).